A 2646-amino-acid polypeptide reads, in one-letter code: MSGLLDDDEIIQVSPDSIITSSIGSASLNYSVNGADDNKSIPPSSPQQNLLENDTLSPPPPLPTQTINTSSSPPPPTIITTTTTTTTTTAMSPVATTTTSSPTISASPTYITSPSGTRLSGGNTFNAQQLKSLLLASNIPIPPVPTSPTSTPPNLQTNNNNKQDKDKDNETFATLINEELPLTTEEKENIKAQKKDLISSLPEVPLFISPSPTLSRNNNGKRNSGGNKPPLSPIKISSTSAAGDVSPSISLNNSGSGIYNSTSPSGTASTQTLNILSQLQQQQRNGNNNNNNNNNNNYLSSPTMPALNKHSTHGNFHNSVAGYGNNNNNNNNNNKQPQHPMNGNHSPSNGTSGSLSMSGSGIDNGGNNNNNSNTHGSSSNQSSGVTSPIIQSTSPQPPHLTGLNSDSQMPLSSSPTMGYPRGNHNKKTSASAVSSQNRSPLMNSTGVSSSSSGVKQAGAGEKVMQFLGKMSLSKERMSKLVSQSKEQYKTPSSPYQQSTSSSISSGSGTISGHTSPNSLNSVQVVPFEGIFGIPLRVILRYPNESGNQIPSILNSIFTILESSSALSTNRLFYGDYNTSTSNLASSISPISTAANTTIPTISVPTSPNLSSSLSSSSSSGSSGNSSPNIINQLQQQQQPQPTTTTTTNTNTSPHQYLSQKSIKLEVENICNQYDQGIEVSLKKCNVHVVSEILIEFFNRLPEPIISVEFYETLLNYYQTETLLHLMIRKMNNPNKSILCRLMKYLKDIMVYTNFNDVTLELLVERFHKFILRPTIGTIAQSKEISESHLKTIKDIVTMFIQQADILFQSPEERMNTDDAQILYIEEVLTSTQKSQHQSSVGNLWLFHKQIVWRPKVNIDHGEPDLAILFSSILKIVLYTPPQSSSSSSSSSISNSSSASSSSSSTPSISSTSLSSSLKVLPNFTVYCSSDTKTVITFSFQSPSTCKLIYAYINSVTKSISQLNRIIPQKLDMFSLELESLPNEIKQLKDLQELNLNRNKFKLLPGDLARLTSLRTICIEENNLTEISSEMADFLGTRLSNLENVTLSSNRLVVLPPLYTWLKLKTLNISNNYLTKLPIDIFQIPTLEVLRVSNNDLDDNGIPKICTSTKLRSLDLRKNHLTSIPEGIINLVELQVLTLADNQISHLTSDIQKLTSLTELNLNGNQIQSLPPQLLLLTNLKKLYLDNNQLQSISSAIHRMQSLIELRLTNNNISRLPPGIVALKKLNSLELTGNKPLKDNIPEKYIQKGKEGIFSFFSETMRTNVPCYRTRIIMLGDKSTGKSNLIKCLKKLPKSSFSSSSSNLPSLNNLNSNNSNNSGNSKTNILDIQDWQCPINVDGPDGKKKKTITIHLWEFEGMQNDISHVFFVPNIIYTVCFNLSKFGSSKSNEQKITSYLHGINNYDKKATIIIIGTHLDEISSNSKKQVDKVFDCLSLKYKQLFPTLNLVFHAVSTLKSDADGIRKLRRDIKQMIAKNPILKQTYPASFMFLEDYLKEESNLMSPPLVTKKTLQQMARTMELHNEPHFTQLKSLFNSLGSIALFEQFIRMEPGSTPQKTEMIALNPIWIAKAIASLVCFNPQNLPFNVSVSAEEANDASHDSTITGILPHRVLRYVWGTNSKYYVPERFFSLFLSLLESNDLAINIYSLEVNNNNNNNSNGNNVGRGRSGSRSMSIHEANRSNSYFGVNLNNTSSLSSFTSNQKVRNGRSSSFNARVGWALVSSLLAPPPQLSINGNCSISSNSSSSSSSLSNALNLNNISSMIPIIDLPGIWEAFPESPEIHQFSRRFSLDVIPNGLFGRLLSRLMQHAHLYKCWKDLAILVPEIASMSTTSSSSSSSTANSTTTTSATTLQSLASGSSNNTLQQQFREERILVNVDHDSNTIEITIRFIRPSTLSSQVYSIFESLVSKWYKVSFKTFIPCSHCIEKKIVTPHLFKLEECEAQIFKGELGIYCQYKPNNNNSSNDTSSPIASSRSNPKISRKDSKNLIQSNNNDNNNSLSKKDLKELAKQNKEKEKEKEKDKDKEKEKERKVEIYRDDSFLVPIRSLLLDQFSICHFIKEIDYREIEVLPDHSNQNENGTSTQSMMGMYGKQFVNIKVFNAPLLGADFQNNCARILSSFRHEALSLYNFRHSNVLSIIGISMNPIAIITENPTFGSKGSTTLSEYIQDRQKHPEIPWNIKLKIALDIARAMDKLNSHSPPFLLTNLTSSGIILEKSNDHQSSGNGLEIEPFVNAKIIDFSQSSFLPSLFPTSTTPKSYHSPEVLQKLNYHENSDVYSFGIILYELLTRSIAFQDHDRFSNIVISGQRPSIPLDCLPSFADLIKDCWSGEPLNRPSPSKIISQLYTIKKEIESKEHSYKSLASDNNIYSDHPLPSGGSIIYQDKIIHFGGWNNSSKPHSKVFALNLSSMLFEDKLMVVLNNKQSTTYKAFYTHMQSEFNEENLMFYEAIKTFKSLPNQTPDDREIIKIQSKKIYQVFIGENAPKEINLPFLLKKELKNKIDFPDGPSVTVFNDTLTFVISSIEDSFHRFKFTVPTTNKNGWVEIECKGIPPLPMVGHSSILWNNSLIVIGGWFNKARLLNQIHILNLETFEWNQFVCTGDIPPSSIAALNITLHGDYLLAYYERTDSIKQQIFRLSLDSFIWFSLKLSNV.

Disordered stretches follow at residues 28–122 (LNYS…LSGG), 138–168 (NIPI…KDKD), 205–248 (PLFI…VSPS), 281–457 (QQQR…VKQA), 477–516 (MSKL…HTSP), 605–656 (TSPN…PHQY), and 882–907 (QSSS…STPS). Residues 46-56 (PQQNLLENDTL) show a composition bias toward polar residues. 3 stretches are compositionally biased toward low complexity: residues 78 to 115 (IITT…TSPS), 147 to 161 (SPTS…NNNN), and 215 to 228 (SRNN…GGNK). Residues 235–248 (KISSTSAAGDVSPS) show a composition bias toward polar residues. Composition is skewed to low complexity over residues 285 to 297 (NGNN…NNNN) and 325 to 334 (NNNNNNNNNN). A compositionally biased stretch (polar residues) spans 335 to 345 (KQPQHPMNGNH). The segment covering 346-394 (SPSNGTSGSLSMSGSGIDNGGNNNNNSNTHGSSSNQSSGVTSPIIQSTS) has biased composition (low complexity). 2 stretches are compositionally biased toward polar residues: residues 402–416 (GLNS…SSPT) and 428–443 (TSAS…PLMN). Low complexity-rich tracts occupy residues 444–454 (STGVSSSSSGV), 491–516 (PSSP…HTSP), 605–627 (TSPN…NSSP), 634–651 (QQQQ…NTNT), and 883–907 (SSSS…STPS). One can recognise a Rho-GAP domain in the interval 585-807 (SSISPISTAA…MFIQQADILF (223 aa)). LRR repeat units lie at residues 968–987 (QKLD…IKQL), 989–1011 (DLQE…ARLT), 1012–1033 (SLRT…MADF), 1040–1061 (NLEN…YTWL), 1062–1083 (KLKT…IFQI), 1085–1108 (TLEV…CTST), 1109–1131 (KLRS…INLV), 1132–1154 (ELQV…QKLT), 1155–1176 (SLTE…LLLL), 1178–1199 (NLKK…IHRM), 1201–1222 (SLIE…IVAL), 1224–1247 (KLNS…YIQK), 1248–1270 (GKEG…YRTR), 1271–1298 (IIML…SFSS), and 1303–1327 (LPSL…ILDI). Residues 1262 to 1474 (TNVPCYRTRI…RDIKQMIAKN (213 aa)) form the Roc domain. Disordered regions lie at residues 1293–1317 (KSSF…SNNS), 1651–1670 (NNNN…SRSM), and 1957–2026 (NNSS…KEKE). A compositionally biased stretch (low complexity) spans 1651-1669 (NNNNSNGNNVGRGRSGSRS). A compositionally biased stretch (polar residues) spans 1966–1975 (PIASSRSNPK). A compositionally biased stretch (low complexity) spans 1983–1996 (NLIQSNNNDNNNSL). Positions 1997-2026 (SKKDLKELAKQNKEKEKEKEKDKDKEKEKE) are enriched in basic and acidic residues. Residues 2049–2342 (FSICHFIKEI…PSKIISQLYT (294 aa)) enclose the Protein kinase domain. ATP-binding positions include 2055–2063 (IKEIDYREI) and Lys-2094. One can recognise an RGS domain in the interval 2412–2536 (MVVLNNKQST…FTVPTTNKNG (125 aa)).

This sequence belongs to the protein kinase superfamily. TKL Ser/Thr protein kinase family. ROCO subfamily.

The sequence is that of Probable inactive serine/threonine-protein kinase roco10 (roco10) from Dictyostelium discoideum (Social amoeba).